The following is a 108-amino-acid chain: Evasin P1229 (108 aa).

A signal peptide spans 1-31 (MEVRTFAFLQIVVFVALGIQLFAAVTDAADA). 3 disulfide bridges follow: Cys-41/Cys-63, Cys-45/Cys-65, and Cys-56/Cys-76. Asn-44 carries N-linked (GlcNAc...) asparagine glycosylation. The tract at residues 88-108 (GDPNNSDLDAATPRHPDASSR) is disordered. Asn-91 is a glycosylation site (N-linked (GlcNAc...) asparagine). Over residues 99-108 (TPRHPDASSR) the composition is skewed to basic and acidic residues.

The protein localises to the secreted. Functionally, salivary chemokine-binding protein which binds to host chemokines CXCL1 and CXCL8. This is Evasin P1229 from Ixodes ricinus (Common tick).